The primary structure comprises 451 residues: DNA polymerase IV (451 aa).

Residues 5–187 (VIHVDMDAFF…LPVGRLWGVG (183 aa)) form the UmuC domain. Positions 9 and 104 each coordinate Mg(2+). The active site involves Glu-105.

The protein belongs to the DNA polymerase type-Y family. Monomer. Mg(2+) is required as a cofactor.

The protein resides in the cytoplasm. It carries out the reaction DNA(n) + a 2'-deoxyribonucleoside 5'-triphosphate = DNA(n+1) + diphosphate. Functionally, poorly processive, error-prone DNA polymerase involved in untargeted mutagenesis. Copies undamaged DNA at stalled replication forks, which arise in vivo from mismatched or misaligned primer ends. These misaligned primers can be extended by PolIV. Exhibits no 3'-5' exonuclease (proofreading) activity. May be involved in translesional synthesis, in conjunction with the beta clamp from PolIII. The sequence is that of DNA polymerase IV from Corynebacterium diphtheriae (strain ATCC 700971 / NCTC 13129 / Biotype gravis).